The primary structure comprises 353 residues: H(2)-forming methylenetetrahydromethanopterin dehydrogenase-related protein MJ1338 (353 aa).

The protein belongs to the HMD family.

This chain is H(2)-forming methylenetetrahydromethanopterin dehydrogenase-related protein MJ1338, found in Methanocaldococcus jannaschii (strain ATCC 43067 / DSM 2661 / JAL-1 / JCM 10045 / NBRC 100440) (Methanococcus jannaschii).